The sequence spans 246 residues: Type III pantothenate kinase (246 aa).

An ATP-binding site is contributed by 6 to 13 (DVGNSRIK). Substrate contacts are provided by residues tyrosine 93 and 100–103 (GSDR). The active-site Proton acceptor is the aspartate 102. Threonine 125 serves as a coordination point for ATP. Threonine 175 lines the substrate pocket.

It belongs to the type III pantothenate kinase family. Homodimer. NH4(+) serves as cofactor. The cofactor is K(+).

The protein resides in the cytoplasm. The catalysed reaction is (R)-pantothenate + ATP = (R)-4'-phosphopantothenate + ADP + H(+). It participates in cofactor biosynthesis; coenzyme A biosynthesis; CoA from (R)-pantothenate: step 1/5. Functionally, catalyzes the phosphorylation of pantothenate (Pan), the first step in CoA biosynthesis. The sequence is that of Type III pantothenate kinase from Dichelobacter nodosus (strain VCS1703A).